A 207-amino-acid chain; its full sequence is Large ribosomal subunit protein eL13 (207 aa).

It belongs to the eukaryotic ribosomal protein eL13 family. In terms of assembly, component of the 60S large ribosomal subunit (LSU).

It localises to the cytoplasm. Its function is as follows. Component of the ribosome, a large ribonucleoprotein complex responsible for the synthesis of proteins in the cell. The small ribosomal subunit (SSU) binds messenger RNAs (mRNAs) and translates the encoded message by selecting cognate aminoacyl-transfer RNA (tRNA) molecules. The large subunit (LSU) contains the ribosomal catalytic site termed the peptidyl transferase center (PTC), which catalyzes the formation of peptide bonds, thereby polymerizing the amino acids delivered by tRNAs into a polypeptide chain. The nascent polypeptides leave the ribosome through a tunnel in the LSU and interact with protein factors that function in enzymatic processing, targeting, and the membrane insertion of nascent chains at the exit of the ribosomal tunnel. As part of the LSU, it is probably required for its formation and the maturation of rRNAs. The chain is Large ribosomal subunit protein eL13 (rpl-13) from Caenorhabditis elegans.